A 93-amino-acid polypeptide reads, in one-letter code: Putative pterin-4-alpha-carbinolamine dehydratase (93 aa).

This sequence belongs to the pterin-4-alpha-carbinolamine dehydratase family.

It carries out the reaction (4aS,6R)-4a-hydroxy-L-erythro-5,6,7,8-tetrahydrobiopterin = (6R)-L-erythro-6,7-dihydrobiopterin + H2O. This Nostoc sp. (strain PCC 7120 / SAG 25.82 / UTEX 2576) protein is Putative pterin-4-alpha-carbinolamine dehydratase.